A 275-amino-acid polypeptide reads, in one-letter code: MGIKRYKPTSPGRRGMTVSDFAEITKFEPEKSLTEPLKKHAGRNNHGHITTRHRGGGHKRRYRLIDFKRKKFDIPAKVAGIEYDPNRSANIALLHYTDGEKRYIIAPLGLKVGDTLMAGPNAEIRVGNALPLANIPIGSQIHNIELTPGRGGQLVRSAGNTAQLMAREGNYATVRLPSGEMRMVHIKCMATLGQVGNVDHQNIMIGKAGRSRWLGRRPVVRGSAMNPVDHPHGGGEGRAPTGMNPKTKWGKPAMGKKTRHNPRTQRFIVRTRKQK.

Disordered stretches follow at residues 38-59 (KKHA…GGHK) and 222-275 (GSAM…RKQK). 2 stretches are compositionally biased toward basic residues: residues 39–59 (KHAG…GGHK) and 254–275 (MGKK…RKQK).

Belongs to the universal ribosomal protein uL2 family. Part of the 50S ribosomal subunit. Forms a bridge to the 30S subunit in the 70S ribosome.

Its function is as follows. One of the primary rRNA binding proteins. Required for association of the 30S and 50S subunits to form the 70S ribosome, for tRNA binding and peptide bond formation. It has been suggested to have peptidyltransferase activity; this is somewhat controversial. Makes several contacts with the 16S rRNA in the 70S ribosome. The sequence is that of Large ribosomal subunit protein uL2 from Herpetosiphon aurantiacus (strain ATCC 23779 / DSM 785 / 114-95).